The chain runs to 263 residues: tRNA (guanine-N(7)-)-methyltransferase (263 aa).

Residues 1-10 (MLPQDPSTEP) show a composition bias toward polar residues. The disordered stretch occupies residues 1 to 38 (MLPQDPSTEPTPADDAAPVDSAGQASAPSPADPEGVAH). S-adenosyl-L-methionine contacts are provided by Glu91, Glu116, Asp143, and Asp166. The active site involves Asp166. Lys170 provides a ligand contact to substrate. Residues 172-177 (RHNKRR) form an interaction with RNA region. Residues Asp202 and 240 to 243 (TKFE) contribute to the substrate site.

Belongs to the class I-like SAM-binding methyltransferase superfamily. TrmB family.

It carries out the reaction guanosine(46) in tRNA + S-adenosyl-L-methionine = N(7)-methylguanosine(46) in tRNA + S-adenosyl-L-homocysteine. Its pathway is tRNA modification; N(7)-methylguanine-tRNA biosynthesis. Its function is as follows. Catalyzes the formation of N(7)-methylguanine at position 46 (m7G46) in tRNA. The protein is tRNA (guanine-N(7)-)-methyltransferase of Cupriavidus necator (strain ATCC 17699 / DSM 428 / KCTC 22496 / NCIMB 10442 / H16 / Stanier 337) (Ralstonia eutropha).